The chain runs to 145 residues: 3-dehydroquinate dehydratase (145 aa).

Tyrosine 24 functions as the Proton acceptor in the catalytic mechanism. Substrate contacts are provided by asparagine 76, histidine 82, and aspartate 89. Histidine 102 serves as the catalytic Proton donor. Residues 103–104 (VS) and arginine 113 contribute to the substrate site.

It belongs to the type-II 3-dehydroquinase family. Homododecamer.

It carries out the reaction 3-dehydroquinate = 3-dehydroshikimate + H2O. The protein operates within metabolic intermediate biosynthesis; chorismate biosynthesis; chorismate from D-erythrose 4-phosphate and phosphoenolpyruvate: step 3/7. Functionally, catalyzes a trans-dehydration via an enolate intermediate. The sequence is that of 3-dehydroquinate dehydratase from Janthinobacterium sp. (strain Marseille) (Minibacterium massiliensis).